We begin with the raw amino-acid sequence, 149 residues long: Natriuretic peptides A (149 aa).

The first 23 residues, 1-23, serve as a signal peptide directing secretion; sequence MGSPIAASFLLFLAVQLLGQTGA. 2 consecutive propeptides follow at residues 24 to 121 and 91 to 101; these read NPVY…AAPR and DGGALGRSPWD. A disordered region spans residues 49–103; sequence MPLEDEAESPQALSEQNAEAGAALSPLPEVPPWTGEVSPAQRDGGALGRSPWDSS. Serine 127 is subject to Phosphoserine. Cysteine 128 and cysteine 144 are joined by a disulfide. The segment at 145–149 is important for degradation of atrial natriuretic peptide by IDE; it reads NSFRY.

This sequence belongs to the natriuretic peptide family. Homodimer; disulfide-linked antiparallel dimer. In terms of processing, the precursor molecule is proteolytically cleaved by CORIN at Arg-121 to produce the atrial natriuretic peptide. Undergoes further proteolytic cleavage by unknown proteases to give rise to long-acting natriuretic peptide, vessel dilator and kaliuretic peptide. Additional processing gives rise to the auriculin and atriopeptin peptides. In the kidneys, alternative processing by an unknown protease results in the peptide urodilatin. Post-translationally, cleavage by MME initiates degradation of the factor and thereby regulates its activity. Degradation by IDE results in reduced activation of NPR1 (in vitro). During IDE degradation, the resulting products can temporarily stimulate NPR2 to produce cGMP, before the fragments are completely degraded and inactivated by IDE (in vitro). Degraded by IDE. In terms of processing, phosphorylation on Ser-127 decreases vasorelaxant activity.

The protein resides in the secreted. It is found in the perikaryon. It localises to the cell projection. Its function is as follows. Hormone that plays a key role in mediating cardio-renal homeostasis, and is involved in vascular remodeling and regulating energy metabolism. Acts by specifically binding and stimulating NPR1 to produce cGMP, which in turn activates effector proteins, such as PRKG1, that drive various biological responses. Regulates vasodilation, natriuresis, diuresis and aldosterone synthesis and is therefore essential for regulating blood pressure, controlling the extracellular fluid volume and maintaining the fluid-electrolyte balance. Also involved in inhibiting cardiac remodeling and cardiac hypertrophy by inducing cardiomyocyte apoptosis and attenuating the growth of cardiomyocytes and fibroblasts. Plays a role in female pregnancy by promoting trophoblast invasion and spiral artery remodeling in uterus, and thus prevents pregnancy-induced hypertension. In adipose tissue, acts in various cGMP- and PKG-dependent pathways to regulate lipid metabolism and energy homeostasis. This includes up-regulating lipid metabolism and mitochondrial oxygen utilization by activating the AMP-activated protein kinase (AMPK), and increasing energy expenditure by acting via MAPK11 to promote the UCP1-dependent thermogenesis of brown adipose tissue. Binds the clearance receptor NPR3 which removes the hormone from circulation. Functionally, may have a role in cardio-renal homeostasis through regulation of natriuresis, diuresis, vasodilation, and inhibiting aldosterone synthesis. In vitro, promotes the production of cGMP and induces vasodilation. May promote natriuresis, at least in part, by enhancing prostaglandin E2 synthesis resulting in the inhibition of renal Na+-K+-ATPase. However reports on the involvement of this peptide in mammal blood volume and blood pressure homeostasis are conflicting; according to a report, in vivo it is not sufficient to activate cGMP and does not inhibit collecting duct transport nor effect diuresis and natriuresis. Appears to bind to specific receptors that are distinct from the receptors bound by atrial natriuretic peptide and vessel dilator. Possibly enhances protein excretion in urine by decreasing proximal tubular protein reabsorption. In terms of biological role, may have a role in cardio-renal homeostasis through regulation of natriuresis, diuresis, and vasodilation. In vitro, promotes the production of cGMP and induces vasodilation. May promote natriuresis, at least in part, by enhancing prostaglandin E2 synthesis resulting in the inhibition of renal Na+-K+-ATPase. However reports on the involvement of this peptide in mammal blood volume and blood pressure homeostasis are conflicting; according to a report it is not sufficient to activate cGMP and does not inhibit collecting duct transport nor effect diuresis and natriuresis. Appears to bind to specific receptors that are distinct from the receptors bound by the atrial natriuretic and long-acting natriuretic peptides. Possibly functions in protein excretion in urine by maintaining the integrity of the proximal tubules and enhancing protein excretion by decreasing proximal tubular protein reabsorption. May have a role in cardio-renal homeostasis through regulation of diuresis and inhibiting aldosterone synthesis. In vitro, promotes the production of cGMP and induces vasodilation. May promote natriuresis, at least in part, by enhancing prostaglandin E2 synthesis resulting in the inhibition of renal Na+-K+-ATPase. May have a role in potassium excretion but not sodium excretion (natriuresis). Possibly enhances protein excretion in urine by decreasing proximal tubular protein reabsorption. Its function is as follows. Hormone produced in the kidneys that appears to be important for maintaining cardio-renal homeostasis. Mediates vasodilation, natriuresis and diuresis primarily in the renal system, in order to maintain the extracellular fluid volume and control the fluid-electrolyte balance. Specifically binds and stimulates cGMP production by renal transmembrane receptors, likely NPR1. Urodilatin not ANP, may be the natriuretic peptide responsible for the regulation of sodium and water homeostasis in the kidney. Functionally, may have a role in cardio-renal homeostasis through regulation of natriuresis and vasodilation. In vivo promotes natriuresis and in vitro, vasodilates renal artery strips. In terms of biological role, may have a role in cardio-renal homeostasis through regulation of regulation of natriuresis and vasodilation. In vivo promotes natriuresis. In vitro, vasodilates intestinal smooth muscle but not smooth muscle strips. May have a role in cardio-renal homeostasis through regulation of natriuresis and vasodilation. In vivo promotes natriuresis. In vitro, selectively vasodilates intestinal and vascular smooth muscle strips. Its function is as follows. May have a role in cardio-renal homeostasis through regulation of natriuresis and vasodilation. In vivo promotes natriuresis. In vitro, selectively vasodilates intestinal smooth muscle but not vascular smooth muscle strips. This is Natriuretic peptides A (NPPA) from Canis lupus familiaris (Dog).